The chain runs to 640 residues: Tyrosine--tRNA ligase, mitochondrial (640 aa).

Tyrosine 100 lines the L-tyrosine pocket. Aspartate 104 is a binding site for ATP. The short motif at 105-114 is the 'HIGH' region element; the sequence is PTAPSLHIGH. Residues aspartate 144, tyrosine 248, glutamine 252, aspartate 255, and glutamine 274 each contribute to the L-tyrosine site. The 'KMSKS' region signature appears at 322–326; it reads KFGKS. Position 325 (lysine 325) interacts with ATP.

The protein belongs to the class-I aminoacyl-tRNA synthetase family.

Its subcellular location is the mitochondrion matrix. The enzyme catalyses tRNA(Tyr) + L-tyrosine + ATP = L-tyrosyl-tRNA(Tyr) + AMP + diphosphate + H(+). Functionally, has both an aminoacyl-tRNA synthetase activity and is involved in the splicing of group I introns. This Podospora anserina (Pleurage anserina) protein is Tyrosine--tRNA ligase, mitochondrial (YTS1).